Here is an 881-residue protein sequence, read N- to C-terminus: DNA mismatch repair protein MutS (881 aa).

ATP is bound at residue 626 to 633 (GPNMAGKS).

It belongs to the DNA mismatch repair MutS family.

This protein is involved in the repair of mismatches in DNA. It is possible that it carries out the mismatch recognition step. This protein has a weak ATPase activity. The protein is DNA mismatch repair protein MutS of Desulfosudis oleivorans (strain DSM 6200 / JCM 39069 / Hxd3) (Desulfococcus oleovorans).